The primary structure comprises 391 residues: D-xylose 1-dehydrogenase (NADP(+)) (391 aa).

Belongs to the Gfo/Idh/MocA family.

The enzyme catalyses D-xylose + NADP(+) = D-xylono-1,5-lactone + NADPH + H(+). In terms of biological role, NADP-dependent D-xylose dehydrogenase catalyzing the oxydation of D-xylose into D-xylonolactone. Also displays some, albeit lower activity with D-glucose, D-galactose and L-arabinose as substrate. Probably not involved in D-xylose degradation, as it has been shown that H.jecorina assimilates D-xylose via D-xylose reductase and xylitol dehydrogenase, and it is unable to grow on D-xylonic acid as sole carbon source. May play a role in the regeneration of NADP(+) in the presence of D-xylose. In Hypocrea jecorina (strain ATCC 56765 / BCRC 32924 / NRRL 11460 / Rut C-30) (Trichoderma reesei), this protein is D-xylose 1-dehydrogenase (NADP(+)).